We begin with the raw amino-acid sequence, 279 residues long: UTP--glucose-1-phosphate uridylyltransferase (279 aa).

The protein belongs to the UDPGP type 2 family.

The catalysed reaction is alpha-D-glucose 1-phosphate + UTP + H(+) = UDP-alpha-D-glucose + diphosphate. In terms of biological role, may play a role in stationary phase survival. The polypeptide is UTP--glucose-1-phosphate uridylyltransferase (galU) (Pseudomonas aeruginosa (strain ATCC 15692 / DSM 22644 / CIP 104116 / JCM 14847 / LMG 12228 / 1C / PRS 101 / PAO1)).